A 729-amino-acid chain; its full sequence is DNA topoisomerase 3 (729 aa).

Residues 3-136 (KSVVIAEKPS…IKRLWISSVT (134 aa)) form the Toprim domain. Mg(2+) contacts are provided by glutamate 9 and aspartate 105. The Topo IA-type catalytic domain occupies 153-594 (YDNLYASAVA…EMKNYTKEIV (442 aa)). The tract at residues 187–192 (NCGRVQ) is interaction with DNA. Tyrosine 310 acts as the O-(5'-phospho-DNA)-tyrosine intermediate in catalysis. The span at 686 to 713 (ERRKKESGNKADKRDVQKYMKQQKKEEE) shows a compositional bias: basic and acidic residues. The tract at residues 686-718 (ERRKKESGNKADKRDVQKYMKQQKKEEEPLNNP) is disordered.

This sequence belongs to the type IA topoisomerase family. The cofactor is Mg(2+).

It catalyses the reaction ATP-independent breakage of single-stranded DNA, followed by passage and rejoining.. Functionally, releases the supercoiling and torsional tension of DNA, which is introduced during the DNA replication and transcription, by transiently cleaving and rejoining one strand of the DNA duplex. Introduces a single-strand break via transesterification at a target site in duplex DNA. The scissile phosphodiester is attacked by the catalytic tyrosine of the enzyme, resulting in the formation of a DNA-(5'-phosphotyrosyl)-enzyme intermediate and the expulsion of a 3'-OH DNA strand. The free DNA strand then undergoes passage around the unbroken strand, thus removing DNA supercoils. Finally, in the religation step, the DNA 3'-OH attacks the covalent intermediate to expel the active-site tyrosine and restore the DNA phosphodiester backbone. The protein is DNA topoisomerase 3 of Bacillus cereus (strain ATCC 10987 / NRS 248).